A 307-amino-acid chain; its full sequence is MSDSRGVLSISTSTTFQGLIHTLNRYWAEQGCVLVQPLDLEVGAGTFHPATFLRALGPEPWNAAYVQPSRRPTDGRYGENPNRLQRYYQYQVAMKPNPDNLQELYLASLQALGIDPLVHDVRFVEDNWESPTLGAWGLGWEVWLNGMEVTQFTYFQQAGGLECKPVLGEVTYGLERLCMYLQSCDNVYDLVWTYGPDGTPVTYGDVYHQNEVEQSAYNFEHANVTELLHTFDACEREAKALVEAVLPLPAYEKVIKASHCFNLLDARRTISVTERQRYILRIRTLSQEVAKAYYAQREKLGFPNLRR.

This sequence belongs to the class-II aminoacyl-tRNA synthetase family. As to quaternary structure, tetramer of two alpha and two beta subunits.

The protein resides in the cytoplasm. The enzyme catalyses tRNA(Gly) + glycine + ATP = glycyl-tRNA(Gly) + AMP + diphosphate. The protein is Glycine--tRNA ligase alpha subunit (glyQ) of Xylella fastidiosa (strain 9a5c).